We begin with the raw amino-acid sequence, 133 residues long: Small ribosomal subunit protein uS8 (133 aa).

The protein belongs to the universal ribosomal protein uS8 family. In terms of assembly, part of the 30S ribosomal subunit. Contacts proteins S5 and S12.

Its function is as follows. One of the primary rRNA binding proteins, it binds directly to 16S rRNA central domain where it helps coordinate assembly of the platform of the 30S subunit. This Synechococcus sp. (strain WH7803) protein is Small ribosomal subunit protein uS8.